The sequence spans 399 residues: Imidazolonepropionase (399 aa).

A compositionally biased stretch (polar residues) spans 1–13 (MSETLYTGISQLA). The interval 1 to 20 (MSETLYTGISQLATPRPGPQ) is disordered. Fe(3+)-binding residues include His74 and His76. Positions 74 and 76 each coordinate Zn(2+). Arg83, Tyr146, and His176 together coordinate 4-imidazolone-5-propanoate. Residue Tyr146 participates in N-formimidoyl-L-glutamate binding. His238 is a Fe(3+) binding site. Residue His238 participates in Zn(2+) binding. Gln241 provides a ligand contact to 4-imidazolone-5-propanoate. Position 312 (Asp312) interacts with Fe(3+). Asp312 provides a ligand contact to Zn(2+). The N-formimidoyl-L-glutamate site is built by Asn314 and Gly316. Ser317 serves as a coordination point for 4-imidazolone-5-propanoate.

Belongs to the metallo-dependent hydrolases superfamily. HutI family. Zn(2+) serves as cofactor. The cofactor is Fe(3+).

The protein resides in the cytoplasm. It catalyses the reaction 4-imidazolone-5-propanoate + H2O = N-formimidoyl-L-glutamate. It functions in the pathway amino-acid degradation; L-histidine degradation into L-glutamate; N-formimidoyl-L-glutamate from L-histidine: step 3/3. Its function is as follows. Catalyzes the hydrolytic cleavage of the carbon-nitrogen bond in imidazolone-5-propanoate to yield N-formimidoyl-L-glutamate. It is the third step in the universal histidine degradation pathway. In Deinococcus radiodurans (strain ATCC 13939 / DSM 20539 / JCM 16871 / CCUG 27074 / LMG 4051 / NBRC 15346 / NCIMB 9279 / VKM B-1422 / R1), this protein is Imidazolonepropionase.